We begin with the raw amino-acid sequence, 522 residues long: MASGGGGCSASERLPPPFPGMDPESEGAAGGSEPEAGDSDTEGEDIFTGAAAASKPQSPKKTTSLFPIKNGSKENGIHEEQDQEPQDLFADATVELSLDSTQNNQKTMPGKTLIPHPTQEATNSPKPQPSYEELEEEEQEDQFDLTVGITDPEKIGDGMNAYVAYKVTTQTSLPMFRSRQFAVKRRFSDFLGLYEKLSEKHSQNGFIVPPPPEKSLIGMTKVKVGKEDSSSAEFLEKRRAALERYLQRIVNHPTMLQDPDVREFLEKEELPRAVGTQALSGAGLLKMFNKATDAVSKMTIKMNESDIWFEEKLQEVECEEQRLRKLHAVVETLVNHRKELALNTALFAKSLAMLGSSEDNTALSRALSQLAEVEEKIEQLHQEQANNDFFLLAELLSDYIRLLAIVRAAFDQRMKTWQRWQDAQATLQKKRESEARLLWANKPDKLQQAKDEITEWESRVTQYERDFERISTVVRKEVTRFEKEKSKDFKNHVIKYLETLLHSQQQLAKYWEAFLPEARAIS.

Residues 1 to 142 are disordered; that stretch reads MASGGGGCSA…ELEEEEQEDQ (142 aa). A phosphoserine mark is found at S32 and S39. Residues 35 to 45 show a composition bias toward acidic residues; that stretch reads EAGDSDTEGED. Phosphothreonine is present on residues T41 and T48. Over residues 55–65 the composition is skewed to polar residues; it reads KPQSPKKTTSL. 2 positions are modified to phosphoserine: S58 and S72. Residues 71–80 are compositionally biased toward basic and acidic residues; the sequence is GSKENGIHEE. Polar residues predominate over residues 98 to 107; it reads LDSTQNNQKT. The span at 132 to 142 shows a compositional bias: acidic residues; the sequence is EELEEEEQEDQ. The PX domain maps to 143–272; that stretch reads FDLTVGITDP…EFLEKEELPR (130 aa). Residues R186, S188, and K214 each coordinate a 1,2-diacyl-sn-glycero-3-phospho-(1D-myo-inositol-3-phosphate). Phosphoserine is present on S188. K237 bears the N6-acetyllysine mark. R238 lines the a 1,2-diacyl-sn-glycero-3-phospho-(1D-myo-inositol-3-phosphate) pocket. S280 carries the post-translational modification Phosphoserine. Residues 281 to 298 are membrane-binding amphipathic helix; it reads GAGLLKMFNKATDAVSKM. Residues 302–522 form the BAR domain; sequence MNESDIWFEE…AFLPEARAIS (221 aa).

The protein belongs to the sorting nexin family. Predominantly forms heterodimers with BAR domain-containing sorting nexins SNX5, SNX6 and SNX32; can self-associate to form homodimers. The heterodimers are proposed to self-assemble into helical arrays on the membrane to stabilize and expand local membrane curvature underlying endosomal tubule formation. Thought to be a component of the originally described retromer complex (also called SNX-BAR retromer) which is a pentamer containing the heterotrimeric retromer cargo-selective complex (CSC), also described as vacuolar protein sorting subcomplex (VPS) and a heterodimeric membrane-deforming subcomplex formed between SNX1 or SNX2 and SNX5 or SNX6 (also called SNX-BAR subcomplex); the respective CSC and SNX-BAR subcomplexes associate with low affinity. Interacts with SNX5, SNX6, SNX32, VPS26A, VPS29, VPS35, DRD5, DENND5A, KALRN, RHOG (GDP-bound form). The interaction with SNX2 is reported controversially. Interacts with DNAJC13; prevented by presence of HGS. Interacts with HGS.

Its subcellular location is the endosome membrane. The protein localises to the golgi apparatus. The protein resides in the trans-Golgi network membrane. It localises to the early endosome membrane. It is found in the cell projection. Its subcellular location is the lamellipodium. Involved in several stages of intracellular trafficking. Interacts with membranes containing phosphatidylinositol 3-phosphate (PtdIns(3P)) or phosphatidylinositol 3,5-bisphosphate (PtdIns(3,5)P2). Acts in part as component of the retromer membrane-deforming SNX-BAR subcomplex. The SNX-BAR retromer mediates retrograde transport of cargo proteins from endosomes to the trans-Golgi network (TGN) and is involved in endosome-to-plasma membrane transport for cargo protein recycling. The SNX-BAR subcomplex functions to deform the donor membrane into a tubular profile called endosome-to-TGN transport carrier (ETC). Can sense membrane curvature and has in vitro vesicle-to-membrane remodeling activity. Involved in retrograde endosome-to-TGN transport of lysosomal enzyme receptors (IGF2R, M6PR and SORT1). Plays a role in targeting ligand-activated EGFR to the lysosomes for degradation after endocytosis from the cell surface and release from the Golgi. Involvement in retromer-independent endocytic trafficking of P2RY1 and lysosomal degradation of protease-activated receptor-1/F2R. Promotes KALRN- and RHOG-dependent but retromer-independent membrane remodeling such as lamellipodium formation; the function is dependent on GEF activity of KALRN. Required for endocytosis of DRD5 upon agonist stimulation but not for basal receptor trafficking. This Rattus norvegicus (Rat) protein is Sorting nexin-1 (Snx1).